We begin with the raw amino-acid sequence, 791 residues long: Probable phosphoketolase (791 aa).

Belongs to the XFP family. Thiamine diphosphate serves as cofactor.

The polypeptide is Probable phosphoketolase (Pseudomonas putida (strain ATCC 700007 / DSM 6899 / JCM 31910 / BCRC 17059 / LMG 24140 / F1)).